Consider the following 370-residue polypeptide: Putative agmatine deiminase (370 aa).

Cysteine 361 functions as the Amidino-cysteine intermediate in the catalytic mechanism.

The protein belongs to the agmatine deiminase family.

It catalyses the reaction agmatine + H2O = N-carbamoylputrescine + NH4(+). In Shewanella baltica (strain OS155 / ATCC BAA-1091), this protein is Putative agmatine deiminase.